The following is a 381-amino-acid chain: Creatine kinase M-type (381 aa).

A Phosphagen kinase N-terminal domain is found at 11-98 (KLNFKAEEEY…FDPIIQDRHG (88 aa)). Residues 125–367 (YVLSSRVRTG…KLMVEMEKKL (243 aa)) form the Phosphagen kinase C-terminal domain. 128-132 (SSRVR) serves as a coordination point for ATP. S164 bears the Phosphoserine mark. At T166 the chain carries Phosphothreonine. A Phosphoserine modification is found at S178. At T180 the chain carries Phosphothreonine. H191 serves as a coordination point for ATP. S199 carries the phosphoserine modification. Residues R236 and R292 each contribute to the ATP site. Residues T313 and T322 each carry the phosphothreonine modification. ATP is bound by residues 320-325 (RGTGGV) and D335. S372 is modified (phosphoserine).

Belongs to the ATP:guanido phosphotransferase family. Dimer of identical or non-identical chains, which can be either B (brain type) or M (muscle type). With MM being the major form in skeletal muscle and myocardium, MB existing in myocardium, and BB existing in many tissues, especially brain.

It carries out the reaction creatine + ATP = N-phosphocreatine + ADP + H(+). Reversibly catalyzes the transfer of phosphate between ATP and various phosphogens (e.g. creatine phosphate). Creatine kinase isoenzymes play a central role in energy transduction in tissues with large, fluctuating energy demands, such as skeletal muscle, heart, brain and spermatozoa. The sequence is that of Creatine kinase M-type (CKM) from Sus scrofa (Pig).